Reading from the N-terminus, the 94-residue chain is Large ribosomal subunit protein uL22 (94 aa).

This sequence belongs to the universal ribosomal protein uL22 family. In terms of assembly, part of the 50S ribosomal subunit.

Its function is as follows. This protein binds specifically to 23S rRNA; its binding is stimulated by other ribosomal proteins, e.g. L4, L17, and L20. It is important during the early stages of 50S assembly. It makes multiple contacts with different domains of the 23S rRNA in the assembled 50S subunit and ribosome. The globular domain of the protein is located near the polypeptide exit tunnel on the outside of the subunit, while an extended beta-hairpin is found that lines the wall of the exit tunnel in the center of the 70S ribosome. The chain is Large ribosomal subunit protein uL22 (rplV) from Tomato big bud phytoplasma.